Consider the following 171-residue polypeptide: uncharacterized protein (171 aa).

2 consecutive transmembrane segments (helical) span residues 13–35 (VGAS…IATA) and 50–72 (ATVL…AYVV).

It localises to the cell membrane. This is an uncharacterized protein from Treponema pallidum (strain Nichols).